Consider the following 553-residue polypeptide: Phenylalanine--tRNA ligase alpha subunit (553 aa).

The L-phenylalanine site is built by threonine 400 and phenylalanine 479. A Mg(2+)-binding site is contributed by glutamate 481.

Belongs to the class-II aminoacyl-tRNA synthetase family. Phe-tRNA synthetase alpha subunit type 2 subfamily. In terms of assembly, tetramer of two alpha and two beta subunits. Requires Mg(2+) as cofactor.

It localises to the cytoplasm. It carries out the reaction tRNA(Phe) + L-phenylalanine + ATP = L-phenylalanyl-tRNA(Phe) + AMP + diphosphate + H(+). The chain is Phenylalanine--tRNA ligase alpha subunit from Treponema pallidum (strain Nichols).